A 173-amino-acid polypeptide reads, in one-letter code: Crossover junction endodeoxyribonuclease RuvC (173 aa).

Active-site residues include D11, E71, and D143. Positions 11, 71, and 143 each coordinate Mg(2+).

The protein belongs to the RuvC family. Homodimer which binds Holliday junction (HJ) DNA. The HJ becomes 2-fold symmetrical on binding to RuvC with unstacked arms; it has a different conformation from HJ DNA in complex with RuvA. In the full resolvosome a probable DNA-RuvA(4)-RuvB(12)-RuvC(2) complex forms which resolves the HJ. Requires Mg(2+) as cofactor.

The protein localises to the cytoplasm. The enzyme catalyses Endonucleolytic cleavage at a junction such as a reciprocal single-stranded crossover between two homologous DNA duplexes (Holliday junction).. The RuvA-RuvB-RuvC complex processes Holliday junction (HJ) DNA during genetic recombination and DNA repair. Endonuclease that resolves HJ intermediates. Cleaves cruciform DNA by making single-stranded nicks across the HJ at symmetrical positions within the homologous arms, yielding a 5'-phosphate and a 3'-hydroxyl group; requires a central core of homology in the junction. The consensus cleavage sequence is 5'-(A/T)TT(C/G)-3'. Cleavage occurs on the 3'-side of the TT dinucleotide at the point of strand exchange. HJ branch migration catalyzed by RuvA-RuvB allows RuvC to scan DNA until it finds its consensus sequence, where it cleaves and resolves the cruciform DNA. The polypeptide is Crossover junction endodeoxyribonuclease RuvC (Brucella abortus (strain 2308)).